A 233-amino-acid polypeptide reads, in one-letter code: Orotidine 5'-phosphate decarboxylase (233 aa).

Substrate contacts are provided by residues Asp-11, Lys-34, 61–70 (DLKLHDIPNT), Thr-117, Arg-179, Gln-189, Gly-209, and Arg-210. The Proton donor role is filled by Lys-63.

It belongs to the OMP decarboxylase family. Type 1 subfamily. In terms of assembly, homodimer.

It carries out the reaction orotidine 5'-phosphate + H(+) = UMP + CO2. It participates in pyrimidine metabolism; UMP biosynthesis via de novo pathway; UMP from orotate: step 2/2. Its function is as follows. Catalyzes the decarboxylation of orotidine 5'-monophosphate (OMP) to uridine 5'-monophosphate (UMP). This chain is Orotidine 5'-phosphate decarboxylase, found in Streptococcus agalactiae serotype III (strain NEM316).